Here is a 219-residue protein sequence, read N- to C-terminus: Proteasome subunit beta (219 aa).

A propeptide spans 1–14 (MISNSEYHKEYMKG) (removed in mature form; by autocatalysis). Catalysis depends on threonine 15, which acts as the Nucleophile.

The protein belongs to the peptidase T1B family. As to quaternary structure, the 20S proteasome core is composed of 14 alpha and 14 beta subunits that assemble into four stacked heptameric rings, resulting in a barrel-shaped structure. The two inner rings, each composed of seven catalytic beta subunits, are sandwiched by two outer rings, each composed of seven alpha subunits. The catalytic chamber with the active sites is on the inside of the barrel. Has a gated structure, the ends of the cylinder being occluded by the N-termini of the alpha-subunits. Is capped at one or both ends by the proteasome regulatory ATPase, PAN.

It is found in the cytoplasm. The enzyme catalyses Cleavage of peptide bonds with very broad specificity.. With respect to regulation, the formation of the proteasomal ATPase PAN-20S proteasome complex, via the docking of the C-termini of PAN into the intersubunit pockets in the alpha-rings, triggers opening of the gate for substrate entry. Interconversion between the open-gate and close-gate conformations leads to a dynamic regulation of the 20S proteasome proteolysis activity. Functionally, component of the proteasome core, a large protease complex with broad specificity involved in protein degradation. This chain is Proteasome subunit beta, found in Methanococcus maripaludis (strain C5 / ATCC BAA-1333).